Consider the following 335-residue polypeptide: Phosphate acyltransferase (335 aa).

It belongs to the PlsX family. Homodimer. Probably interacts with PlsY.

The protein localises to the cytoplasm. The catalysed reaction is a fatty acyl-[ACP] + phosphate = an acyl phosphate + holo-[ACP]. It functions in the pathway lipid metabolism; phospholipid metabolism. Its function is as follows. Catalyzes the reversible formation of acyl-phosphate (acyl-PO(4)) from acyl-[acyl-carrier-protein] (acyl-ACP). This enzyme utilizes acyl-ACP as fatty acyl donor, but not acyl-CoA. In Alkaliphilus oremlandii (strain OhILAs) (Clostridium oremlandii (strain OhILAs)), this protein is Phosphate acyltransferase.